Reading from the N-terminus, the 394-residue chain is Candidapepsin (394 aa).

The signal sequence occupies residues 1 to 23 (MATIFLFTKNVFIALAFALFAQG). A propeptide spans 24–60 (LTIPDGIEKRTDKVVSLDFTVIRKPFNATAHRLIQKR) (activation peptide). Residue Asn50 is glycosylated (N-linked (GlcNAc...) asparagine). One can recognise a Peptidase A1 domain in the interval 74–381 (YAADIVVGSN…DLDDKTISLA (308 aa)). Residue Asp92 is part of the active site. A disulfide bridge links Cys107 with Cys119. The active site involves Asp278. A disulfide bridge links Cys314 with Cys347.

This sequence belongs to the peptidase A1 family. In terms of processing, O-glycosylated.

It is found in the secreted. The enzyme catalyses Preferential cleavage at the carboxyl of hydrophobic amino acids, but fails to cleave 15-Leu-|-Tyr-16, 16-Tyr-|-Leu-17 and 24-Phe-|-Phe-25 of insulin B chain. Activates trypsinogen, and degrades keratin.. The polypeptide is Candidapepsin (SAPT1) (Candida tropicalis (Yeast)).